A 237-amino-acid polypeptide reads, in one-letter code: Leucyl/phenylalanyl-tRNA--protein transferase (237 aa).

This sequence belongs to the L/F-transferase family.

It is found in the cytoplasm. The enzyme catalyses N-terminal L-lysyl-[protein] + L-leucyl-tRNA(Leu) = N-terminal L-leucyl-L-lysyl-[protein] + tRNA(Leu) + H(+). It carries out the reaction N-terminal L-arginyl-[protein] + L-leucyl-tRNA(Leu) = N-terminal L-leucyl-L-arginyl-[protein] + tRNA(Leu) + H(+). The catalysed reaction is L-phenylalanyl-tRNA(Phe) + an N-terminal L-alpha-aminoacyl-[protein] = an N-terminal L-phenylalanyl-L-alpha-aminoacyl-[protein] + tRNA(Phe). Its function is as follows. Functions in the N-end rule pathway of protein degradation where it conjugates Leu, Phe and, less efficiently, Met from aminoacyl-tRNAs to the N-termini of proteins containing an N-terminal arginine or lysine. The chain is Leucyl/phenylalanyl-tRNA--protein transferase from Shewanella baltica (strain OS155 / ATCC BAA-1091).